The chain runs to 106 residues: PAT complex subunit Asterix (106 aa).

Residues 1–29 (MSTNNMSDPRRPNKVLRYKPPPSECNPAL) are disordered. Serine 2 bears the N-acetylserine mark. Over 2–32 (STNNMSDPRRPNKVLRYKPPPSECNPALDDP) the chain is Cytoplasmic. The helical transmembrane segment at 33–51 (TPDYMNLLGMIFSMCGLML) threads the bilayer. Residue lysine 52 is a topological domain, lumenal. Residues 53–70 (LKWCAWVAVYCSFISFAN) traverse the membrane as a helical segment. At 71-74 (SRSS) the chain is on the cytoplasmic side. Residues 75 to 95 (EDTKQMMSSFMLSISAVVMSY) form a helical membrane-spanning segment. Residues 96 to 106 (LQNPQPMTPPW) are Lumenal-facing.

This sequence belongs to the Asterix family. Component of the PAT complex, composed of WDR83OS/Asterix and CCDC47. The PAT complex is part of the multi-pass translocon (MPT) complex, composed of three subcomplexes, the GEL complex (composed of RAB5IF/OPTI and TMCO1), the BOS complex (composed of NCLN/Nicalin, NOMO1 and TMEM147) and the PAT complex (composed of WDR83OS/Asterix and CCDC47). The MPT complex associates with the SEC61 complex.

It is found in the endoplasmic reticulum membrane. Its function is as follows. Component of the multi-pass translocon (MPT) complex that mediates insertion of multi-pass membrane proteins into the lipid bilayer of membranes. The MPT complex takes over after the SEC61 complex: following membrane insertion of the first few transmembrane segments of proteins by the SEC61 complex, the MPT complex occludes the lateral gate of the SEC61 complex to promote insertion of subsequent transmembrane regions. Within the MPT complex, the PAT subcomplex sequesters any highly polar regions in the transmembrane domains away from the non-polar membrane environment until they can be buried in the interior of the fully assembled protein. Within the PAT subcomplex, WDR83OS/Asterix binds to and redirects the substrate to a location behind the SEC61 complex. The protein is PAT complex subunit Asterix (WDR83OS) of Canis lupus familiaris (Dog).